The sequence spans 104 residues: Protein MHF2 homolog (104 aa).

Belongs to the CENP-X/MHF2 family.

The protein resides in the nucleus. Acts in the same pathway as FANCM to restrain class II meiotic crossing over (CO), and acts with FANCM during meiosis to repair interstrand cross-links (ICLs). The sequence is that of Protein MHF2 homolog from Arabidopsis thaliana (Mouse-ear cress).